Reading from the N-terminus, the 785-residue chain is Tripartite terminase subunit 1 (785 aa).

The C3H1-type zinc finger occupies 197–225 (CAVCFEELCVTANQGATIARRLADRICNH). 2 disordered regions span residues 433-452 (GGAADAPKGGAGPDDDGDRV) and 457-489 (GARGLGAPGGGGEDEDRRRGPGGQGPETWGDIA). 696–703 (FASVYRCG) provides a ligand contact to ATP.

This sequence belongs to the herpesviridae TRM1 protein family. In terms of assembly, associates with TRM2 and TRM3 to form the tripartite terminase complex. Interacts with portal protein.

The protein resides in the host nucleus. Functionally, component of the molecular motor that translocates viral genomic DNA in empty capsid during DNA packaging. Forms a tripartite terminase complex together with TRM2 and TRM3 in the host cytoplasm. Once the complex reaches the host nucleus, it interacts with the capsid portal vertex. This portal forms a ring in which genomic DNA is translocated into the capsid. TRM1 carries an endonuclease activity that plays an important role for the cleavage of concatemeric viral DNA into unit length genomes. In Human herpesvirus 1 (strain 17) (HHV-1), this protein is Tripartite terminase subunit 1.